We begin with the raw amino-acid sequence, 340 residues long: GTPase Obg (340 aa).

The Obg domain maps to 1–159; the sequence is MGFIDEVKLC…KHVLLKLKVL (159 aa). Residues 160–329 form the OBG-type G domain; that stretch reads SDVGIIGMPN…LSEKLKKSNS (170 aa). Residues 166 to 173, 191 to 195, 212 to 215, 279 to 282, and 310 to 312 each bind GTP; these read GMPNAGKS, FTTVR, DIPG, NKCD, and NGD. Mg(2+) contacts are provided by serine 173 and threonine 193.

This sequence belongs to the TRAFAC class OBG-HflX-like GTPase superfamily. OBG GTPase family. In terms of assembly, monomer. The cofactor is Mg(2+).

It is found in the cytoplasm. An essential GTPase which binds GTP, GDP and possibly (p)ppGpp with moderate affinity, with high nucleotide exchange rates and a fairly low GTP hydrolysis rate. Plays a role in control of the cell cycle, stress response, ribosome biogenesis and in those bacteria that undergo differentiation, in morphogenesis control. In Wolbachia pipientis wMel, this protein is GTPase Obg.